The following is a 111-amino-acid chain: Cyanovirin-N homolog (111 aa).

The protein belongs to the cyanovirin-N family.

Its function is as follows. Mannose-binding lectin. This is Cyanovirin-N homolog from Neurospora crassa (strain ATCC 24698 / 74-OR23-1A / CBS 708.71 / DSM 1257 / FGSC 987).